Reading from the N-terminus, the 413-residue chain is Phosphopentomutase (413 aa).

6 residues coordinate Mn(2+): Asp11, Asp306, His311, Asp347, His348, and His359.

It belongs to the phosphopentomutase family. It depends on Mn(2+) as a cofactor.

It localises to the cytoplasm. It carries out the reaction 2-deoxy-alpha-D-ribose 1-phosphate = 2-deoxy-D-ribose 5-phosphate. The catalysed reaction is alpha-D-ribose 1-phosphate = D-ribose 5-phosphate. Its pathway is carbohydrate degradation; 2-deoxy-D-ribose 1-phosphate degradation; D-glyceraldehyde 3-phosphate and acetaldehyde from 2-deoxy-alpha-D-ribose 1-phosphate: step 1/2. Functionally, isomerase that catalyzes the conversion of deoxy-ribose 1-phosphate (dRib-1-P) and ribose 1-phosphate (Rib-1-P) to deoxy-ribose 5-phosphate (dRib-5-P) and ribose 5-phosphate (Rib-5-P), respectively. The chain is Phosphopentomutase from Helicobacter pylori (strain Shi470).